A 297-amino-acid chain; its full sequence is tRNA dimethylallyltransferase (297 aa).

15-22 (GPTASGKS) is a binding site for ATP. 17 to 22 (TASGKS) is a substrate binding site. 2 interaction with substrate tRNA regions span residues 40–43 (DSMQ) and 164–168 (QRIVR).

This sequence belongs to the IPP transferase family. In terms of assembly, monomer. Mg(2+) is required as a cofactor.

The catalysed reaction is adenosine(37) in tRNA + dimethylallyl diphosphate = N(6)-dimethylallyladenosine(37) in tRNA + diphosphate. Functionally, catalyzes the transfer of a dimethylallyl group onto the adenine at position 37 in tRNAs that read codons beginning with uridine, leading to the formation of N6-(dimethylallyl)adenosine (i(6)A). In Rhizobium etli (strain ATCC 51251 / DSM 11541 / JCM 21823 / NBRC 15573 / CFN 42), this protein is tRNA dimethylallyltransferase.